The primary structure comprises 518 residues: Retinal dehydrogenase 2 (518 aa).

Phosphotyrosine is present on Tyr168. Residues 184–186 (IPW), 210–213 (KPAE), and 264–266 (STE) each bind NAD(+). The active-site Proton acceptor is the Glu286. The active-site Nucleophile is Cys320. Ser351 carries the post-translational modification Phosphoserine. Residues 366–370 (KQYNK) and Glu417 each bind NAD(+).

It belongs to the aldehyde dehydrogenase family. Homotetramer.

Its subcellular location is the cytoplasm. The enzyme catalyses retinal + NAD(+) + H2O = retinoate + NADH + 2 H(+). The catalysed reaction is all-trans-retinal + NAD(+) + H2O = all-trans-retinoate + NADH + 2 H(+). It carries out the reaction all-trans-13,14-dihydroretinal + NAD(+) + H2O = all-trans-13,14-dihydroretinoate + NADH + 2 H(+). It participates in cofactor metabolism; retinol metabolism. Functionally, catalyzes the NAD-dependent oxidation of aldehyde substrates, such as all-trans-retinal and all-trans-13,14-dihydroretinal, to their corresponding carboxylic acids, all-trans-retinoate and all-trans-13,14-dihydroretinoate, respectively. Retinoate signaling is critical for the transcriptional control of many genes, for instance it is crucial for initiation of meiosis in both male and female. Recognizes retinal as substrate, both in its free form and when bound to cellular retinol-binding protein. Can metabolize octanal and decanal, but has only very low activity with benzaldehyde, acetaldehyde and propanal. Displays complete lack of activity with citral. This Homo sapiens (Human) protein is Retinal dehydrogenase 2 (ALDH1A2).